A 458-amino-acid chain; its full sequence is NADH-quinone oxidoreductase subunit N (458 aa).

13 consecutive transmembrane segments (helical) span residues 3-23, 29-49, 64-84, 92-112, 147-167, 188-208, 222-242, 265-285, 291-311, 320-340, 358-378, 394-414, and 437-457; these read QYLFLLPEITLFILSCLLLFL, FGLIAVLITLAATFFSQTCTS, QNVKLVILAFTCVFFIQAIAV, FSVLVLLSLLGMLLSVSSSTL, TLLGTFMSAVMIYGISLIFVV, ILLFISGLMFKVAAAPFHAWI, FFAVLPKLSLIVVLVSLISNL, NILFTSGILSIAFGTFSAFGQ, FIGFASIAHVGYMLLGVSNSA, IAYALVYSFTNLGILSVVLML, VALAFVLLLFSSAGVPPFIGF, IPTAIFSMLAGVISAFYYARI, and LLTSIVVLCALFSTFGFVLLI.

It belongs to the complex I subunit 2 family. In terms of assembly, NDH-1 is composed of 14 different subunits. Subunits NuoA, H, J, K, L, M, N constitute the membrane sector of the complex.

The protein localises to the cell inner membrane. It carries out the reaction a quinone + NADH + 5 H(+)(in) = a quinol + NAD(+) + 4 H(+)(out). In terms of biological role, NDH-1 shuttles electrons from NADH, via FMN and iron-sulfur (Fe-S) centers, to quinones in the respiratory chain. The immediate electron acceptor for the enzyme in this species is believed to be ubiquinone. Couples the redox reaction to proton translocation (for every two electrons transferred, four hydrogen ions are translocated across the cytoplasmic membrane), and thus conserves the redox energy in a proton gradient. The sequence is that of NADH-quinone oxidoreductase subunit N from Neorickettsia risticii (strain Illinois).